The following is a 488-amino-acid chain: MKIIEKFADEVINSGAYEPLDRVYVINKIRALVGDHDEEEENDQPAAKQLVDLAVKNEKIPDDITSREVLNDQLYDLATPTPSKTNSIFWQKMQKSSEENTDWFYKLCEDNNYVKKEAIAKNVVFSGTSSKGHSLEITINLSKPEKDPKAIAAAAHATGKKYPQCALCLENEGYLGGYGKNARSNLRIIRMNIAGRPWGFQYSPYAYFNEHCIFLDQKHIPMVINQQTLINLVEIEKIFPHYFVGSNADLPIVGGSMLAHEHYQGGRHTFPMMKAGIKKNIMFDSYPKVVAGIVDWPMSDLRLTSDNSLDLIDLGSKIIKFWDNYSDTARDIKAYEGETRHHTVTPIMHREGKNFVLDLVLRDNNTSEKYPLGIFHPHKQLWHIKKENIGLIEVMGRAILPGRLKSELEEVKKYWLGEDNKMAASHKEWADQVKAENEISLDNVDQVMEQSLVEVFEQVLQDAGVFKNNADGEEGWDKFITALTKEIK.

It belongs to the galactose-1-phosphate uridylyltransferase type 2 family.

It localises to the cytoplasm. The enzyme catalyses alpha-D-galactose 1-phosphate + UDP-alpha-D-glucose = alpha-D-glucose 1-phosphate + UDP-alpha-D-galactose. It functions in the pathway carbohydrate metabolism; galactose metabolism. The polypeptide is Galactose-1-phosphate uridylyltransferase (galT) (Lactobacillus helveticus (Lactobacillus suntoryeus)).